The following is a 348-amino-acid chain: Carbamoyl phosphate synthase small chain (348 aa).

The segment at 1–167 (MKRYLITSDG…VKNIRGKGER (167 aa)) is CPSase. The L-glutamine site is built by S45, G213, and G215. The Glutamine amidotransferase type-1 domain occupies 168–348 (RILFIDLGSK…RRRTEDAAKG (181 aa)). C242 acts as the Nucleophile in catalysis. Positions 243, 246, 282, 284, and 285 each coordinate L-glutamine. Catalysis depends on residues H321 and E323.

The protein belongs to the CarA family. Composed of two chains; the small (or glutamine) chain promotes the hydrolysis of glutamine to ammonia, which is used by the large (or ammonia) chain to synthesize carbamoyl phosphate. Tetramer of heterodimers (alpha,beta)4.

The catalysed reaction is hydrogencarbonate + L-glutamine + 2 ATP + H2O = carbamoyl phosphate + L-glutamate + 2 ADP + phosphate + 2 H(+). It catalyses the reaction L-glutamine + H2O = L-glutamate + NH4(+). It participates in amino-acid biosynthesis; L-arginine biosynthesis; carbamoyl phosphate from bicarbonate: step 1/1. The protein operates within pyrimidine metabolism; UMP biosynthesis via de novo pathway; (S)-dihydroorotate from bicarbonate: step 1/3. Functionally, small subunit of the glutamine-dependent carbamoyl phosphate synthetase (CPSase). CPSase catalyzes the formation of carbamoyl phosphate from the ammonia moiety of glutamine, carbonate, and phosphate donated by ATP, constituting the first step of 2 biosynthetic pathways, one leading to arginine and/or urea and the other to pyrimidine nucleotides. The small subunit (glutamine amidotransferase) binds and cleaves glutamine to supply the large subunit with the substrate ammonia. The protein is Carbamoyl phosphate synthase small chain of Thermoplasma acidophilum (strain ATCC 25905 / DSM 1728 / JCM 9062 / NBRC 15155 / AMRC-C165).